A 203-amino-acid chain; its full sequence is VEL1-related protein SPBPB2B2.15 (203 aa).

An N-terminal signal peptide occupies residues 1–16 (MFKNLIFLFFIGLATA).

It belongs to the VEL1 family.

It is found in the cytoplasm. It localises to the cytosol. The sequence is that of VEL1-related protein SPBPB2B2.15 from Schizosaccharomyces pombe (strain 972 / ATCC 24843) (Fission yeast).